Consider the following 309-residue polypeptide: MSKVLIFGHKNPDTDTICSAIAYAELKKELGMDAEPVRLGEINGETEYALKKFNAEVPRLVNTVANETDSVILVDHNERQQSVDDLDQVRVLEVIDHHRIANFETSDPLYYRAEPVGCTATILNKLYKENGVEIKKDIAGLMLSAIISDSLLFKSPTCTEEDVKAAKELAAIAGVDADSYGLDMLKAGADLSAKTIPQLLSLDAKEFTMGSHKVEIAQVNTVDTNDVLSRKEEVDAELAKAVSEKGLDLFVFVVTDILTNDSVVVASGQAAQAVEKAFNVTLADNTATLKGVVSRKKQIVPPLTEALKG.

The Mn(2+) site is built by histidine 9, aspartate 13, aspartate 15, aspartate 75, histidine 97, and aspartate 149.

Belongs to the PPase class C family. Mn(2+) serves as cofactor.

The protein resides in the cytoplasm. The catalysed reaction is diphosphate + H2O = 2 phosphate + H(+). In Bacillus licheniformis (strain ATCC 14580 / DSM 13 / JCM 2505 / CCUG 7422 / NBRC 12200 / NCIMB 9375 / NCTC 10341 / NRRL NRS-1264 / Gibson 46), this protein is Probable manganese-dependent inorganic pyrophosphatase.